A 351-amino-acid polypeptide reads, in one-letter code: Modulator of apoptosis 1 (351 aa).

An LIR motif is present at residues 49-52 (YRLL). The segment at 120 to 127 (LTRALAHE) is BH3-like. An RASSF1-binding region spans residues 202 to 205 (KRRR).

Belongs to the PNMA family. In terms of assembly, homodimer. Under normal circumstances, held in an inactive conformation by an intramolecular interaction. Interacts with BAX. Binding to RASSF1 isoform A (RASSF1A) relieves this inhibitory interaction and allows further binding to BAX. Also binds to BCL2 and BCLX. Recruited to the TNFRSF1A and TNFRSF10A complexes in response to their respective cognate ligand, after internalization. Interacts with TRIM39. Interacts with RASSF6. Interacts with ATG8 proteins MAP1LC3A, MAP1LC3B and MAP1LC3C. Does not interact with ATG8 proteins GABARAPL1, GABARAPL2 and GABARAP. Interacts with SQSTM1; promoting dissociation of SQSTM1 inclusion bodies that sequester KEAP1. Ubiquitinated and degraded during mitotic exit by APC/C-Cdh1, this modification is inhibited by TRIM39.

Its subcellular location is the cytoplasm. It localises to the cytosol. The protein localises to the mitochondrion outer membrane. It is found in the extracellular vesicle membrane. Its function is as follows. Retrotransposon-derived protein that forms virion-like capsids. Acts as an effector of BAX during apoptosis: enriched at outer mitochondria membrane and associates with BAX upon induction of apoptosis, facilitating BAX-dependent mitochondrial outer membrane permeabilization and apoptosis. Required for death receptor-dependent apoptosis. When associated with RASSF1, promotes BAX conformational change and translocation to mitochondrial membranes in response to TNF and TNFSF10 stimulation. Also promotes autophagy: promotes phagophore closure via association with ATG8 proteins. Acts as an inhibitor of the NFE2L2/NRF2 pathway via interaction with SQSTM1: interaction promotes dissociation of SQSTM1 inclusion bodies that sequester KEAP1, relieving inactivation of the BCR(KEAP1) complex. The polypeptide is Modulator of apoptosis 1 (Macaca fascicularis (Crab-eating macaque)).